The sequence spans 31 residues: Cytochrome b6-f complex subunit 6 (31 aa).

A helical transmembrane segment spans residues 4-24; the sequence is ITSYFGFLLAALTITSALFIG.

Belongs to the PetL family. The 4 large subunits of the cytochrome b6-f complex are cytochrome b6, subunit IV (17 kDa polypeptide, PetD), cytochrome f and the Rieske protein, while the 4 small subunits are PetG, PetL, PetM and PetN. The complex functions as a dimer.

The protein resides in the plastid. The protein localises to the chloroplast thylakoid membrane. Component of the cytochrome b6-f complex, which mediates electron transfer between photosystem II (PSII) and photosystem I (PSI), cyclic electron flow around PSI, and state transitions. PetL is important for photoautotrophic growth as well as for electron transfer efficiency and stability of the cytochrome b6-f complex. This Humulus lupulus (European hop) protein is Cytochrome b6-f complex subunit 6.